The primary structure comprises 63 residues: DNA-directed RNA polymerases I, II, and III subunit RPABC4 (63 aa).

Positions 24, 27, 41, and 44 each coordinate Zn(2+). Residues 24-44 (CADCGARNTIQAKEVIRCREC) form a C4-type zinc finger.

It belongs to the archaeal Rpo12/eukaryotic RPC10 RNA polymerase subunit family. Component of the RNA polymerase I (Pol I), RNA polymerase II (Pol II) and RNA polymerase III (Pol III) complexes consisting of 14, 12 and 17 subunits, respectively.

Its subcellular location is the nucleus. DNA-dependent RNA polymerase catalyzes the transcription of DNA into RNA using the four ribonucleoside triphosphates as substrates. Common component of RNA polymerases I, II and III which synthesize ribosomal RNA precursors, mRNA precursors and many functional non-coding RNAs, and a small RNAs, such as 5S rRNA and tRNAs, respectively. In Schizosaccharomyces pombe (strain 972 / ATCC 24843) (Fission yeast), this protein is DNA-directed RNA polymerases I, II, and III subunit RPABC4 (rpc10).